The chain runs to 382 residues: uncharacterized protein (382 aa).

The next 12 helical transmembrane spans lie at 8–28 (VMLL…LNTL), 45–65 (MVSS…GYLI), 75–95 (YLAS…VGFW), 102–122 (FIAG…LMCS), 131–151 (LLAA…LLVS), 157–177 (LLHV…PLLF), 204–224 (LGVN…GLMP), 231–251 (GMAN…GILG), 270–290 (VQVF…AMAP), 291–311 (ALFI…AWAC), 325–345 (ALLL…AMLM), and 349–369 (SDNL…LMLL).

The protein belongs to the major facilitator superfamily. YcaD (TC 2.A.1.26) family.

Its subcellular location is the cell inner membrane. This is an uncharacterized protein from Salmonella dublin (strain CT_02021853).